The chain runs to 347 residues: Protein RecA (347 aa).

64 to 71 lines the ATP pocket; that stretch reads GPESSGKT. The disordered stretch occupies residues 328-347; that stretch reads DKVDEDKTEEEASQESLDLK.

It belongs to the RecA family.

It is found in the cytoplasm. In terms of biological role, can catalyze the hydrolysis of ATP in the presence of single-stranded DNA, the ATP-dependent uptake of single-stranded DNA by duplex DNA, and the ATP-dependent hybridization of homologous single-stranded DNAs. It interacts with LexA causing its activation and leading to its autocatalytic cleavage. The protein is Protein RecA of Oceanobacillus iheyensis (strain DSM 14371 / CIP 107618 / JCM 11309 / KCTC 3954 / HTE831).